A 122-amino-acid polypeptide reads, in one-letter code: Large ribosomal subunit protein uL14 (122 aa).

The protein belongs to the universal ribosomal protein uL14 family. In terms of assembly, part of the 50S ribosomal subunit. Forms a cluster with proteins L3 and L19. In the 70S ribosome, L14 and L19 interact and together make contacts with the 16S rRNA in bridges B5 and B8.

Its function is as follows. Binds to 23S rRNA. Forms part of two intersubunit bridges in the 70S ribosome. The chain is Large ribosomal subunit protein uL14 from Paramagnetospirillum magneticum (strain ATCC 700264 / AMB-1) (Magnetospirillum magneticum).